Reading from the N-terminus, the 356-residue chain is Mitogen-activated protein kinase PMK11 (356 aa).

Residues 24-312 (YDIQDVVGEG…VEEALKHPYL (289 aa)) form the Protein kinase domain. Residues 30–38 (VGEGAYGVV) and lysine 53 contribute to the ATP site.

It belongs to the protein kinase superfamily. CMGC Ser/Thr protein kinase family. MAP kinase subfamily. Requires Mg(2+) as cofactor. Phosphorylated by MST7.

The catalysed reaction is L-seryl-[protein] + ATP = O-phospho-L-seryl-[protein] + ADP + H(+). It carries out the reaction L-threonyl-[protein] + ATP = O-phospho-L-threonyl-[protein] + ADP + H(+). Its function is as follows. Mitogen-activated protein kinase; part of the MST11-MST7-PMK1 MAP kinase (MAPK) cascade that is essential for appressorium formation, penetration and invasive growth. Central regulator of appressorium development that acts downstream of the cAMP signal. The MST11-MST7-PMK1 MAP kinase cascade transduces signals from the cell surface sensors MDB2 and SHO1 that recognize various surface signals such as surface hydrophobicity, cutin monomers, and rice leaf waxes. Regulates expression of secreted fungal effector proteins implicated of host immune defenses, preventing reactive oxygen species generation and excessive callose deposition at plasmodesmata. Furthermore, controls the hyphal constriction required for fungal growth from one rice cell to the neighboring cell, enabling host tissue colonization and blast disease. Targets downstream of the PMK1-MAPK pathway include transcription factor MST12 and pathogenicity-related genes GAS1 and GAS2, both of which are expressed during appressorium formation, even if regulation of MST12 is not associated with expression of GAS1 or GAS2. In Pyricularia oryzae (strain 70-15 / ATCC MYA-4617 / FGSC 8958) (Rice blast fungus), this protein is Mitogen-activated protein kinase PMK11.